A 471-amino-acid chain; its full sequence is MTMKPVIALVGRPNVGKSTLFNRLTRTRDALVADFPGLTRDRKYGDGQLGGYLYTVVDTGGIGENDDGIDVPMTSQSLQAVGEADVVLFMVDGRAGLTAADEQIASELRKLPKPTYLIVNKTDGVDADSAMSEFFALGLTEVLPIAAAHGRGVTSMIEHILEGFTDLELLPEGEHRTSKKPGEDSIRVAVLGRPNVGKSTLINRMLGEERVVVFDHAGTTRDSIEVPFERMGRAYTLIDTAGVRRRGKVFEMVEKFSVIKALQAMEAAQVVVVVIDAREGITDQDLHLLGYALDSGRALMIAVNKWDGLEADHKERVRVNLGRRLEFAPWVKIKFISALHGTGVGDLWGMVEQAWDSAFIKIGTNELTRMMEEITNGHPPPRNGRFRAKLRYAHLGGNNPPTLVLHGNRTEALPTSYKKFLENRFRELLKLEGTPIRLEFKSGTNPYEGRKNVLTDRQVHKRKRMIKRMKK.

EngA-type G domains lie at proline 5 to glutamate 168 and isoleucine 186 to phenylalanine 359. Residues glycine 11–serine 18, aspartate 58–isoleucine 62, asparagine 120–aspartate 123, glycine 192–serine 199, aspartate 239–valine 243, and asparagine 304–aspartate 307 each bind GTP. In terms of domain architecture, KH-like spans isoleucine 360–threonine 444.

This sequence belongs to the TRAFAC class TrmE-Era-EngA-EngB-Septin-like GTPase superfamily. EngA (Der) GTPase family. In terms of assembly, associates with the 50S ribosomal subunit.

Its function is as follows. GTPase that plays an essential role in the late steps of ribosome biogenesis. The protein is GTPase Der of Alcanivorax borkumensis (strain ATCC 700651 / DSM 11573 / NCIMB 13689 / SK2).